Consider the following 202-residue polypeptide: Nucleoside triphosphate pyrophosphatase (202 aa).

Catalysis depends on Asp-79, which acts as the Proton acceptor.

It belongs to the Maf family. The cofactor is a divalent metal cation.

Its subcellular location is the cytoplasm. The catalysed reaction is a ribonucleoside 5'-triphosphate + H2O = a ribonucleoside 5'-phosphate + diphosphate + H(+). The enzyme catalyses a 2'-deoxyribonucleoside 5'-triphosphate + H2O = a 2'-deoxyribonucleoside 5'-phosphate + diphosphate + H(+). Its function is as follows. Nucleoside triphosphate pyrophosphatase. May have a dual role in cell division arrest and in preventing the incorporation of modified nucleotides into cellular nucleic acids. This Rhodopseudomonas palustris (strain BisB5) protein is Nucleoside triphosphate pyrophosphatase.